The sequence spans 221 residues: Iron-sulfur cluster repair protein YtfE (221 aa).

It belongs to the RIC family. YtfE subfamily. As to quaternary structure, homodimer.

The protein resides in the cytoplasm. Di-iron-containing protein involved in the repair of iron-sulfur clusters damaged by oxidative and nitrosative stress conditions. The chain is Iron-sulfur cluster repair protein YtfE from Yersinia pseudotuberculosis serotype O:1b (strain IP 31758).